The sequence spans 908 residues: Zinc finger CCCH domain-containing protein 41 (908 aa).

Polar residues predominate over residues 1 to 13 (MELSVSSPKQSVL). The segment at 1–124 (MELSVSSPKQ…GRGNYGSWAQ (124 aa)) is disordered. Acidic residues predominate over residues 20–34 (SDPEEEHEISEEEDD). Composition is skewed to polar residues over residues 48–59 (SQSLEQDSSDQA) and 90–105 (GQRVQFDNQRMRSNPM). A C3H1-type zinc finger spans residues 200–228 (GIPRQRCRDFEERGFCLRGDMCPMEHGMN). Residues 333–375 (NVAPLDDSNQDAAENGCGIRDSRSTSQSVWGRMKGSNSQANSK) form a disordered region. Polar residues predominate over residues 356–373 (STSQSVWGRMKGSNSQAN). The region spanning 438 to 510 (RTLFVNYVPH…RFIKLWWANR (73 aa)) is the RRM domain. Disordered regions lie at residues 558 to 590 (PTFQTGGAPSSSEQPKPVVVTTSGPKVTPLQQK), 629 to 695 (VVKR…KQRP), and 807 to 908 (RESN…QIHQ). The segment covering 559-588 (TFQTGGAPSSSEQPKPVVVTTSGPKVTPLQ) has biased composition (polar residues). Positions 587 to 630 (LQQKKADTLERLKETLRKKQEMLEQKRNEYRKKLATLEKQGTVV) form a coiled coil. Residues 630-647 (VKREEADEPDAKRVKLDT) are compositionally biased toward basic and acidic residues. Position 657 is a phosphoserine (S657). A compositionally biased stretch (polar residues) spans 677–688 (AKLSTETPSPDS). The span at 807 to 828 (RESNNNNNNSNSLSVSRDNLSS) shows a compositional bias: low complexity. Residues 846–863 (KTSSTEEPENTNVSGDND) show a composition bias toward polar residues. The segment covering 865 to 886 (TLDKQETKESDNDNNKSNHESI) has biased composition (basic and acidic residues). Over residues 898–908 (TDEEQSEQIHQ) the composition is skewed to acidic residues.

In Arabidopsis thaliana (Mouse-ear cress), this protein is Zinc finger CCCH domain-containing protein 41.